Here is a 382-residue protein sequence, read N- to C-terminus: Mannitol-1-phosphate 5-dehydrogenase (382 aa).

Residue 3–14 (ALHFGAGNIGRG) coordinates NAD(+).

It belongs to the mannitol dehydrogenase family.

The enzyme catalyses D-mannitol 1-phosphate + NAD(+) = beta-D-fructose 6-phosphate + NADH + H(+). The polypeptide is Mannitol-1-phosphate 5-dehydrogenase (Cronobacter sakazakii (strain ATCC BAA-894) (Enterobacter sakazakii)).